The primary structure comprises 231 residues: Elongation factor 1-delta 1 (231 aa).

Ala2 carries the post-translational modification N-acetylalanine. Residues Asp10 to Gly73 form the GST C-terminal domain. Disordered stretches follow at residues Thr85 to Asp108 and Glu116 to Thr135. The span at Glu119–Ala129 shows a compositional bias: basic and acidic residues.

Belongs to the EF-1-beta/EF-1-delta family. As to quaternary structure, EF-1 is composed of 4 subunits: alpha, beta (1B-alpha=beta'), delta (1B-beta), and gamma (1B-gamma).

EF-1-beta and EF-1-delta stimulate the exchange of GDP bound to EF-1-alpha to GTP. The protein is Elongation factor 1-delta 1 of Arabidopsis thaliana (Mouse-ear cress).